Reading from the N-terminus, the 319-residue chain is Protein-methionine-sulfoxide reductase catalytic subunit MsrP (319 aa).

A signal peptide (tat-type signal) is located at residues 1–40; the sequence is MHKLNENDVTPEHIFFERRKIIQSMGLMGAASLLPRFSLA. Mo-molybdopterin-binding positions include N73, 76–77, C131, T166, N218, R223, and 234–236; these read YE and NIK.

The protein belongs to the MsrP family. As to quaternary structure, heterodimer of a catalytic subunit (MsrP) and a heme-binding subunit (MsrQ). Mo-molybdopterin is required as a cofactor. In terms of processing, predicted to be exported by the Tat system. The position of the signal peptide cleavage has not been experimentally proven.

Its subcellular location is the periplasm. It catalyses the reaction L-methionyl-[protein] + a quinone + H2O = L-methionyl-(S)-S-oxide-[protein] + a quinol. The catalysed reaction is L-methionyl-[protein] + a quinone + H2O = L-methionyl-(R)-S-oxide-[protein] + a quinol. Its function is as follows. Part of the MsrPQ system that repairs oxidized periplasmic proteins containing methionine sulfoxide residues (Met-O), using respiratory chain electrons. Thus protects these proteins from oxidative-stress damage caused by reactive species of oxygen and chlorine generated by the host defense mechanisms. MsrPQ is essential for the maintenance of envelope integrity under bleach stress, rescuing a wide series of structurally unrelated periplasmic proteins from methionine oxidation. The catalytic subunit MsrP is non-stereospecific, being able to reduce both (R-) and (S-) diastereoisomers of methionine sulfoxide. This Pasteurella multocida (strain Pm70) protein is Protein-methionine-sulfoxide reductase catalytic subunit MsrP.